A 516-amino-acid chain; its full sequence is 2,3-bisphosphoglycerate-independent phosphoglycerate mutase (516 aa).

2 residues coordinate Mn(2+): Asp-14 and Ser-64. Ser-64 (phosphoserine intermediate) is an active-site residue. Substrate contacts are provided by residues His-125, 155–156, Arg-187, Arg-193, 263–266, and Lys-337; these read RD and RPDR. Mn(2+) contacts are provided by Asp-404, His-408, Asp-445, His-446, and His-464.

It belongs to the BPG-independent phosphoglycerate mutase family. As to quaternary structure, monomer. Mn(2+) serves as cofactor.

The catalysed reaction is (2R)-2-phosphoglycerate = (2R)-3-phosphoglycerate. The protein operates within carbohydrate degradation; glycolysis; pyruvate from D-glyceraldehyde 3-phosphate: step 3/5. Its function is as follows. Catalyzes the interconversion of 2-phosphoglycerate and 3-phosphoglycerate. This chain is 2,3-bisphosphoglycerate-independent phosphoglycerate mutase, found in Saccharophagus degradans (strain 2-40 / ATCC 43961 / DSM 17024).